The chain runs to 189 residues: Ras-like protein 1 (189 aa).

GTP is bound at residue 10–17 (GAGGVGKS). Positions 32-40 (YDPTIEDSY) match the Effector region motif. GTP is bound by residues 57 to 61 (DTAGQ) and 116 to 119 (NKCD). Cys186 is subject to Cysteine methyl ester. Cys186 is lipidated: S-geranylgeranyl cysteine. The propeptide at 187–189 (KML) is removed in mature form.

This sequence belongs to the small GTPase superfamily. Ras family.

It localises to the cell membrane. It catalyses the reaction GTP + H2O = GDP + phosphate + H(+). Its activity is regulated as follows. Alternates between an inactive form bound to GDP and an active form bound to GTP. Activated by a guanine nucleotide-exchange factor (GEF) and inactivated by a GTPase-activating protein (GAP). Functionally, ras proteins bind GDP/GTP and possess intrinsic GTPase activity. Plays a role in eye development by regulating cell growth, survival of postmitotic ommatidial cells and differentiation of photoreceptor cells. During larval development, mediates Ptth/tor signaling leading to the production of ecdysone, a hormone required for the initiation of metamorphosis. This chain is Ras-like protein 1, found in Drosophila grimshawi (Hawaiian fruit fly).